The chain runs to 183 residues: Dual-action ribosomal maturation protein DarP (183 aa).

It belongs to the DarP family.

It localises to the cytoplasm. Member of a network of 50S ribosomal subunit biogenesis factors which assembles along the 30S-50S interface, preventing incorrect 23S rRNA structures from forming. Promotes peptidyl transferase center (PTC) maturation. In Salmonella arizonae (strain ATCC BAA-731 / CDC346-86 / RSK2980), this protein is Dual-action ribosomal maturation protein DarP.